A 277-amino-acid chain; its full sequence is Secoisolariciresinol dehydrogenase (277 aa).

NAD(+) contacts are provided by residues 24-29, aspartate 48, valine 73, and asparagine 99; that span reads GGASGI. Serine 163 is a substrate binding site. Tyrosine 166 acts as the Proton donor/acceptor in catalysis. Position 170 (lysine 170) interacts with NAD(+).

It belongs to the short-chain dehydrogenases/reductases (SDR) family. Homotetramer.

The catalysed reaction is (-)-secoisolariciresinol + 2 NAD(+) = (-)-matairesinol + 2 NADH + 2 H(+). Oxidoreductase involved in lignan biosynthesis. Catalyzes the stereospecific conversion of (-)-secoisolariciresinol to (-)-matairesinol via a lactol intermediate. In Forsythia intermedia (Border forsythia), this protein is Secoisolariciresinol dehydrogenase.